A 261-amino-acid chain; its full sequence is Major biofilm matrix component (261 aa).

Positions methionine 1–alanine 27 are cleaved as a signal peptide. The tract at residues aspartate 241 to asparagine 261 is disordered.

Belongs to the peptidase M73 family. As to quaternary structure, forms fibers. Fibers have variable length and are 10-15 nm width. Interacts with obg (AC P20964) in pull-down experiments.

The protein localises to the secreted. It localises to the forespore intermembrane space. TasA is the major protein component of the biofilm extracellular matrix. It forms amyloid fibers that bind cells together in the biofilm. Exhibits an antibacterial activity against a variety of Gram-positive and Gram-negative bacteria. In laboratory strains, is also involved in proper spore coat assembly. The chain is Major biofilm matrix component from Bacillus subtilis (strain 168).